Reading from the N-terminus, the 297-residue chain is UDP-3-O-acyl-N-acetylglucosamine deacetylase (297 aa).

Residues His-77, His-236, and Asp-240 each contribute to the Zn(2+) site. Residue His-263 is the Proton donor of the active site.

The protein belongs to the LpxC family. Requires Zn(2+) as cofactor.

It carries out the reaction a UDP-3-O-[(3R)-3-hydroxyacyl]-N-acetyl-alpha-D-glucosamine + H2O = a UDP-3-O-[(3R)-3-hydroxyacyl]-alpha-D-glucosamine + acetate. It participates in glycolipid biosynthesis; lipid IV(A) biosynthesis; lipid IV(A) from (3R)-3-hydroxytetradecanoyl-[acyl-carrier-protein] and UDP-N-acetyl-alpha-D-glucosamine: step 2/6. Its function is as follows. Catalyzes the hydrolysis of UDP-3-O-myristoyl-N-acetylglucosamine to form UDP-3-O-myristoylglucosamine and acetate, the committed step in lipid A biosynthesis. This Psychrobacter sp. (strain PRwf-1) protein is UDP-3-O-acyl-N-acetylglucosamine deacetylase.